Here is a 372-residue protein sequence, read N- to C-terminus: Adaptive-response sensory kinase SasA (372 aa).

Residues 147 to 360 enclose the Histidine kinase domain; the sequence is MVAHELRTPL…CFHFTVPVWQ (214 aa). Residue histidine 150 is modified to Phosphohistidine; by autocatalysis.

As to quaternary structure, homooligomerizes. Interacts with KaiC. Participates in the KaiBC complex, whose core is composed of a KaiC homohexamer and 6 KaiB.

It catalyses the reaction ATP + protein L-histidine = ADP + protein N-phospho-L-histidine.. Functionally, member of the two-component regulatory system SasA/RpaA involved in genome-wide circadian gene expression. One of several clock output pathways. Participates in the Kai clock protein complex, the main circadian regulator in cyanobacteria, via its interaction with KaiC. KaiC enhances the autophosphorylation activity of SasA, which then transfers its phosphate group to RpaA to activate it. In addition to its output function, recruits fold-shifted KaiB (KaiB(fs)) to KaiC to cooperatively form the KaiB(6):KaiC(6) complex (independent of SasA kinase activity). Required for robustness of the circadian rhythm of gene expression and is involved in clock output, also required for adaptation to light/dark cycles. The polypeptide is Adaptive-response sensory kinase SasA (Prochlorococcus marinus (strain MIT 9215)).